A 720-amino-acid chain; its full sequence is Long chain acyl-CoA synthetase 8 (720 aa).

Met1 bears the N-acetylmethionine mark. 279 to 290 (IMFTSGSTGLPK) contacts ATP. The interval 554–582 (DEKGTRWFYTGDIGRFHPDGCLEVIDRKK) is fatty acid-binding.

This sequence belongs to the ATP-dependent AMP-binding enzyme family. Mg(2+) serves as cofactor.

The enzyme catalyses a long-chain fatty acid + ATP + CoA = a long-chain fatty acyl-CoA + AMP + diphosphate. It functions in the pathway lipid metabolism; fatty acid metabolism. Activation of long-chain fatty acids for both synthesis of cellular lipids, and degradation via beta-oxidation. Preferentially uses palmitate, palmitoleate, oleate and linoleate. The protein is Long chain acyl-CoA synthetase 8 (LACS8) of Arabidopsis thaliana (Mouse-ear cress).